The sequence spans 456 residues: Glycosyl hydrolase family 109 protein 2 (456 aa).

A signal peptide (tat-type signal) is located at residues 1–33 (MSGFDRRSFLKASMVTAAATALAACASSERATG). NAD(+)-binding positions include 63–64 (ER), Asp-85, 134–137 (WAWH), 154–155 (EV), and Asn-183. Substrate-binding positions include Tyr-212, Arg-231, 243–246 (YPTH), and Tyr-325. Tyr-243 lines the NAD(+) pocket.

Belongs to the Gfo/Idh/MocA family. Glycosyl hydrolase 109 subfamily. NAD(+) serves as cofactor. Post-translationally, predicted to be exported by the Tat system. The position of the signal peptide cleavage has not been experimentally proven.

Functionally, glycosidase. This Shewanella sp. (strain MR-4) protein is Glycosyl hydrolase family 109 protein 2.